A 79-amino-acid polypeptide reads, in one-letter code: Sec-independent protein translocase protein TatA (79 aa).

A helical transmembrane segment spans residues 1–21 (MGGFTSIWHWVIVLLVIVLLF). Positions 48–79 (EEEAKNEPKTLDAQATQTKVHESSEIKSKQES) are disordered. Over residues 66–79 (KVHESSEIKSKQES) the composition is skewed to basic and acidic residues.

Belongs to the TatA/E family. As to quaternary structure, the Tat system comprises two distinct complexes: a TatABC complex, containing multiple copies of TatA, TatB and TatC subunits, and a separate TatA complex, containing only TatA subunits. Substrates initially bind to the TatABC complex, which probably triggers association of the separate TatA complex to form the active translocon.

Its subcellular location is the cell inner membrane. Functionally, part of the twin-arginine translocation (Tat) system that transports large folded proteins containing a characteristic twin-arginine motif in their signal peptide across membranes. TatA could form the protein-conducting channel of the Tat system. This is Sec-independent protein translocase protein TatA from Helicobacter pylori (strain ATCC 700392 / 26695) (Campylobacter pylori).